The following is a 173-amino-acid chain: MTNWYNVGRLVNTHGVRGEVRVLSNTDFPEERYANGSVLKVAKSPQAEGTLVTVRSHRTHKNFDLLTFEGYNSINEVECFKGSYLYVSEDQLSELDEHEYYYHEIIGCTVVDEEGTKLGKIKDIIETGANDVWVVDRQQRKDLLLPYIEEVVKEVDVENKRIRVHIMEGLDDE.

The PRC barrel domain occupies 97–170 (EHEYYYHEII…RIRVHIMEGL (74 aa)).

Belongs to the RimM family. In terms of assembly, binds ribosomal protein uS19.

Its subcellular location is the cytoplasm. Functionally, an accessory protein needed during the final step in the assembly of 30S ribosomal subunit, possibly for assembly of the head region. Essential for efficient processing of 16S rRNA. May be needed both before and after RbfA during the maturation of 16S rRNA. It has affinity for free ribosomal 30S subunits but not for 70S ribosomes. This chain is Ribosome maturation factor RimM, found in Shouchella clausii (strain KSM-K16) (Alkalihalobacillus clausii).